The sequence spans 137 residues: Large ribosomal subunit protein uL16 (137 aa).

This sequence belongs to the universal ribosomal protein uL16 family. In terms of assembly, part of the 50S ribosomal subunit.

Its function is as follows. Binds 23S rRNA and is also seen to make contacts with the A and possibly P site tRNAs. This is Large ribosomal subunit protein uL16 from Magnetococcus marinus (strain ATCC BAA-1437 / JCM 17883 / MC-1).